The sequence spans 248 residues: Ubiquinone biosynthesis O-methyltransferase (248 aa).

S-adenosyl-L-methionine contacts are provided by arginine 41, glycine 72, aspartate 93, and methionine 136.

This sequence belongs to the methyltransferase superfamily. UbiG/COQ3 family.

It catalyses the reaction a 3-demethylubiquinol + S-adenosyl-L-methionine = a ubiquinol + S-adenosyl-L-homocysteine + H(+). The catalysed reaction is a 3-(all-trans-polyprenyl)benzene-1,2-diol + S-adenosyl-L-methionine = a 2-methoxy-6-(all-trans-polyprenyl)phenol + S-adenosyl-L-homocysteine + H(+). It participates in cofactor biosynthesis; ubiquinone biosynthesis. In terms of biological role, O-methyltransferase that catalyzes the 2 O-methylation steps in the ubiquinone biosynthetic pathway. The chain is Ubiquinone biosynthesis O-methyltransferase from Rhizobium etli (strain ATCC 51251 / DSM 11541 / JCM 21823 / NBRC 15573 / CFN 42).